The following is a 176-amino-acid chain: Vitamin K epoxide reductase complex subunit 1-like protein 1 (176 aa).

Over Met1–Arg13 the chain is Cytoplasmic. Residues Trp14–Val36 traverse the membrane as a helical segment. The Lumenal portion of the chain corresponds to Glu37–Asn87. Residues Cys50 and Cys58 are joined by a disulfide bond. Asn87 contributes to the (S)-warfarin binding site. Residues Ser88–Gly102 form a helical membrane-spanning segment. Residues Met103–Ala107 lie on the Cytoplasmic side of the membrane. A helical membrane pass occupies residues Val108 to Leu135. Over Lys136–Phe138 the chain is Lumenal. Cysteines 139 and 142 form a disulfide. The helical transmembrane segment at Cys139–Leu160 threads the bilayer. Cys142 and Tyr146 together coordinate phylloquinone. Tyr146 contacts (S)-warfarin. Over Val161 to Asp176 the chain is Cytoplasmic.

Belongs to the VKOR family. Detected in testis and lung.

It is found in the endoplasmic reticulum membrane. It carries out the reaction phylloquinone + [protein]-disulfide + H2O = 2,3-epoxyphylloquinone + [protein]-dithiol. It catalyses the reaction phylloquinol + [protein]-disulfide = phylloquinone + [protein]-dithiol. Its activity is regulated as follows. Inhibited by warfarin (coumadin). Warfarin locks VKORC1 in both redox states into the closed conformation. Its function is as follows. Involved in vitamin K metabolism. Can reduce inactive vitamin K 2,3-epoxide to active vitamin K, and may contribute to vitamin K-mediated protection against oxidative stress. Plays a role in vitamin K-dependent gamma-carboxylation of Glu residues in target proteins. This is Vitamin K epoxide reductase complex subunit 1-like protein 1 (Vkorc1l1) from Mus musculus (Mouse).